The chain runs to 341 residues: Major histocompatibility complex class I-related protein 1 (341 aa).

The signal sequence occupies residues 1-22 (MGELMAFLLPLIIVLMVKHSDS). Residues 23–109 (RTHSLRYFRL…KRLQRHYNHS (87 aa)) are alpha-1. Residues 23–201 (RTHSLRYFRL…EYGKDILQRT (179 aa)) form an antigen-binding cleft region. The Extracellular portion of the chain corresponds to 23-302 (RTHSLRYFRL…QESETIPLVM (280 aa)). Residues Tyr-29 and Arg-31 each coordinate 8-(9H-purin-6-yl)-2-oxa-8-azabicyclo[3.3.1]nona-3,6-diene-4,6-dicarbaldehyde. Residues Arg-31, Ser-46, and Lys-65 each coordinate 5-(2-oxoethylideneamino)-6-(D-ribitylamino)uracil. 5-(2-oxopropylideneamino)-6-(D-ribitylamino)uracil is bound by residues Arg-31, Ser-46, and Lys-65. Positions 31, 46, and 65 each coordinate 7-hydroxy-6-methyl-8-(1-D-ribityl)lumazine. The 8-(9H-purin-6-yl)-2-oxa-8-azabicyclo[3.3.1]nona-3,6-diene-4,6-dicarbaldehyde site is built by Lys-65 and His-80. Lys-65 is a binding site for 2-amino-4-oxopteridine-6-carbaldehyde. Lys-65 provides a ligand contact to pyridoxal. Residue Asn-107 is glycosylated (N-linked (GlcNAc...) asparagine). The interval 110 to 201 (GSHTYQRMIG…EYGKDILQRT (92 aa)) is alpha-2. Arg-116 is an 8-(9H-purin-6-yl)-2-oxa-8-azabicyclo[3.3.1]nona-3,6-diene-4,6-dicarbaldehyde binding site. The 5-(2-oxoethylideneamino)-6-(D-ribitylamino)uracil site is built by Arg-116, Tyr-174, and Gln-175. Arg-116, Tyr-174, and Gln-175 together coordinate 5-(2-oxopropylideneamino)-6-(D-ribitylamino)uracil. 7-hydroxy-6-methyl-8-(1-D-ribityl)lumazine contacts are provided by Arg-116, Tyr-174, and Gln-175. Disulfide bonds link Cys-120/Cys-183 and Cys-222/Cys-278. Positions 202–293 (EPPLVRVNRK…GVHMVLQVPQ (92 aa)) are alpha-3. The Ig-like C1-type domain occupies 203–299 (PPLVRVNRKE…QVPQESETIP (97 aa)). Positions 294 to 302 (ESETIPLVM) are connecting peptide. The helical transmembrane segment at 303 to 323 (KAVSGSIVLVIVLAGVGVLVW) threads the bilayer. Over 324–341 (RRRPREQNGAIYLPTPDR) the chain is Cytoplasmic.

It belongs to the MHC class I family. As to quaternary structure, heterotrimer that consists of MR1, B2M and metabolite antigen. Major classes of metabolite ligands presented by MR1 include riboflavin-related antigens, pyrimidines and ribityl lumazines, nucleobase adducts and folate derivatives. Forms reversible covalent Schiff base complexes with microbial pyrimidine-based metabolite, which serves as a molecular switch triggering complete folding, stable association with B2M and translocation of the ternary complex from endoplasmic reticulum to the plasma membrane. Alternatively, forms non-Schiff base complexes with ribityl lumazines. On antigen-presenting cells, the ternary complex interacts with TCR on MR1-restricted T cells. Interacts with TAPBP and TAPBPL chaperones in the endoplasmic reticulum. TAPBP associated or not with MHC class I peptide loading complex binds ligand-free MR1 or MR1-B2M complex, providing for stable MR1 pools ready for metabolite antigen processing. TAPBPL interacts with MR1 in a ligand-independent way; this interaction may stabilize MR1 pool and facilitate ligand loading and dissociation. Structurally, MR1-B2M heterodimer adopts a topology similar to classical MHC class I molecules, with alpha-1 and alpha-2 domains of MR1 forming the antigen-binding cleft composed of two alpha-helices resting on a floor of 7-stranded anti-parallel beta-pleated sheet. MR1-B2M heterodimer (via alpha-helices) interacts with TCR (via CDR domains). In terms of processing, N-glycosylated.

The protein localises to the cell membrane. It is found in the endoplasmic reticulum membrane. Its subcellular location is the golgi apparatus membrane. It localises to the early endosome membrane. The protein resides in the late endosome membrane. Antigen-presenting molecule specialized in displaying microbial pyrimidine-based metabolites to alpha-beta T cell receptors (TCR) on innate-type mucosal-associated invariant T (MAIT) cells. In complex with B2M preferentially presents riboflavin-derived metabolites to semi-invariant TCRs on MAIT cells, guiding immune surveillance of the microbial metabolome at mucosal epithelial barriers. Signature pyrimidine-based microbial antigens are generated via non-enzymatic condensation of metabolite intermediates of the riboflavin pathway with by-products arising from other metabolic pathways such as glycolysis. Typical potent antigenic metabolites are 5-(2-oxoethylideneamino)-6-D-ribitylaminouracil (5-OE-RU) and 5-(2-oxopropylideneamino)-6-D-ribitylaminouracil (5-OP-RU), products of condensation of 5-amino-6-D-ribityaminouracil (5-A-RU) with glyoxal or methylglyoxal by-products, respectively. May present microbial antigens to various MAIT cell subsets, providing for unique recognition of diverse microbes, including pathogens that do not synthesize riboflavin. Upon antigen recognition, elicits rapid innate-type MAIT cell activation to eliminate pathogenic microbes by directly killing infected cells. During T cell development, drives thymic selection and post-thymic terminal differentiation of MAIT cells in a process dependent on commensal microflora. Acts as an immune sensor of cancer cell metabolome. May present a tumor-specific or -associated metabolite essential for cancer cell survival to a pan-cancer TCR on a non-MAIT CD8-positive T cell clone, triggering T cell-mediated killing of a wide range of cancer cell types. May present tumor-enriched pyridoxal and pyridoxal 5'-phosphate antigens, enabling preferential recognition of cancer cells. Presents nucleobase carbonyl adducts generated during oxidative stress. Captures M3Ade, a nucleobase adduct composed of one adenine modified by a malondialdehyde trimer, for recognition by MR1-restricted T cell clones expressing a polyclonal TCR repertoire. This is Major histocompatibility complex class I-related protein 1 from Pan troglodytes (Chimpanzee).